The following is a 147-amino-acid chain: MSTGEAIPRVAVVVFILNGNSILLGRRRSSIGNSTFALPGGHLEFGESFEECAAREVMEETGLKIEKMKLLTVTNNVFKEAPTPSHYVSVSIRAVLVDPSQEPKNMEPEKCEGWDWYDWENLPKPLFWPLEKLFGSGFNPFTHGGGD.

Position 2 is an N-acetylserine (S2). Positions 7–140 constitute a Nudix hydrolase domain; that stretch reads IPRVAVVVFI…EKLFGSGFNP (134 aa). Residues 41-62 carry the Nudix box motif; the sequence is GHLEFGESFEECAAREVMEETG. 2 residues coordinate Mg(2+): E56 and E60.

This sequence belongs to the Nudix hydrolase family. In terms of assembly, homodimer. Mg(2+) serves as cofactor. It depends on Mn(2+) as a cofactor. As to expression, expressed in roots, stems and leaves.

Its subcellular location is the cytoplasm. The catalysed reaction is 7,8-dihydroneopterin 3'-triphosphate + H2O = 7,8-dihydroneopterin 3'-phosphate + diphosphate + H(+). The enzyme catalyses NAD(+) + H2O = beta-nicotinamide D-ribonucleotide + AMP + 2 H(+). It carries out the reaction NADH + H2O = reduced beta-nicotinamide D-ribonucleotide + AMP + 2 H(+). It catalyses the reaction 8-oxo-dGTP + H2O = 8-oxo-dGMP + diphosphate + H(+). In terms of biological role, mediates the hydrolysis of some nucleoside diphosphate derivatives. Its substrate specificity is unclear. In vitro, it can use NTP, dNTP, 8-oxo-GTP, 8-oxo-dGTP, dGTP, dATP, dTTP or dihydroneopterin triphosphate (DHNTP) as substrate. Has some NADH pyrophosphatase activity in vitro; however, such activity may not be relevant in vivo due to the high concentration of manganese used during the experiments. Plays an important role in protection against oxidative DNA and RNA damage by removing oxidatively damaged form of guanine. The sequence is that of Nudix hydrolase 1 (NUDT1) from Arabidopsis thaliana (Mouse-ear cress).